The following is a 463-amino-acid chain: Glutamate--tRNA ligase 1 (463 aa).

Residues 10 to 20 (PSPTGYLHIGG) carry the 'HIGH' region motif. Residues 238–242 (KLSKR) carry the 'KMSKS' region motif. Lys-241 serves as a coordination point for ATP.

The protein belongs to the class-I aminoacyl-tRNA synthetase family. Glutamate--tRNA ligase type 1 subfamily. As to quaternary structure, monomer.

The protein localises to the cytoplasm. It catalyses the reaction tRNA(Glu) + L-glutamate + ATP = L-glutamyl-tRNA(Glu) + AMP + diphosphate. Catalyzes the attachment of glutamate to tRNA(Glu) in a two-step reaction: glutamate is first activated by ATP to form Glu-AMP and then transferred to the acceptor end of tRNA(Glu). This Helicobacter pylori (strain J99 / ATCC 700824) (Campylobacter pylori J99) protein is Glutamate--tRNA ligase 1.